A 115-amino-acid polypeptide reads, in one-letter code: NAD(P)H-quinone oxidoreductase subunit M (115 aa).

Belongs to the complex I NdhM subunit family. NDH-1 can be composed of about 15 different subunits; different subcomplexes with different compositions have been identified which probably have different functions.

The protein resides in the cellular thylakoid membrane. The catalysed reaction is a plastoquinone + NADH + (n+1) H(+)(in) = a plastoquinol + NAD(+) + n H(+)(out). The enzyme catalyses a plastoquinone + NADPH + (n+1) H(+)(in) = a plastoquinol + NADP(+) + n H(+)(out). In terms of biological role, NDH-1 shuttles electrons from an unknown electron donor, via FMN and iron-sulfur (Fe-S) centers, to quinones in the respiratory and/or the photosynthetic chain. The immediate electron acceptor for the enzyme in this species is believed to be plastoquinone. Couples the redox reaction to proton translocation, and thus conserves the redox energy in a proton gradient. Cyanobacterial NDH-1 also plays a role in inorganic carbon-concentration. In Prochlorococcus marinus (strain MIT 9515), this protein is NAD(P)H-quinone oxidoreductase subunit M.